Reading from the N-terminus, the 69-residue chain is DNA gyrase inhibitor YacG (69 aa).

Residues cysteine 14, cysteine 17, cysteine 33, and cysteine 37 each contribute to the Zn(2+) site. A disordered region spans residues 46-69 (ADEEKSIPGAPDMSDSDGWSEDQY). Residues 59-69 (SDSDGWSEDQY) show a composition bias toward acidic residues.

Belongs to the DNA gyrase inhibitor YacG family. Interacts with GyrB. The cofactor is Zn(2+).

Inhibits all the catalytic activities of DNA gyrase by preventing its interaction with DNA. Acts by binding directly to the C-terminal domain of GyrB, which probably disrupts DNA binding by the gyrase. This is DNA gyrase inhibitor YacG from Aliivibrio fischeri (strain ATCC 700601 / ES114) (Vibrio fischeri).